The chain runs to 373 residues: Glutamine synthetase (373 aa).

At Ala-2 the chain carries N-acetylalanine. A required for glutamine-induced ubiquitination by CRL4(CRBN) and proteasomal degradation region spans residues 2–25 (ATSASSHLNKGIKQVYMSLPQGEK). Residues Lys-11 and Lys-14 each carry the N6-acetyllysine modification. The 83-residue stretch at 24–106 (EKVQAMYIWI…VFCEVFKYNR (83 aa)) folds into the GS beta-grasp domain. Tyr-104 carries the post-translational modification Phosphotyrosine. Residues 113 to 373 (LRHTCKRIMD…TGDEPFQYKN (261 aa)) form the GS catalytic domain. Glu-134 contacts ATP. The Mn(2+) site is built by Glu-134, Glu-136, Glu-196, and Glu-203. 203 to 208 (EFQIGP) lines the ATP pocket. Position 246-247 (246-247 (NW)) interacts with L-glutamate. His-253 serves as a coordination point for Mn(2+). Residues 255-257 (NFS), Arg-319, and Arg-324 contribute to the ATP site. Arg-319 lines the L-glutamate pocket. 336–338 (YFE) is an ADP binding site. Glu-338 is a binding site for Mn(2+). Arg-340 serves as a coordination point for L-glutamate. Ser-343 bears the Phosphoserine mark.

The protein belongs to the glutamine synthetase family. In terms of assembly, decamer; composed of two pentamers. Interacts with PALMD. Interacts with RHOJ. Interacts with BEST2; this interaction tethers a fraction of GLUL to the membrane, causing a decrease of cytosolic glutamine synthase (GS) activity and inhibits the chloride channel activity of BEST2 by affecting the gating at the aperture in the absence of intracellular glutamate. It depends on Mg(2+) as a cofactor. Mn(2+) is required as a cofactor. Post-translationally, palmitoylated; undergoes autopalmitoylation. Acetylated by EP300/p300; acetylation is stimulated by increased glutamine levels and promotes ubiquitin-mediated proteasomal degradation. In terms of processing, ubiquitinated by ZNRF1. Ubiquitinated by the DCX (DDB1-CUL4-X-box) E3 ubiquitin-protein ligase complex called CRL4(CRBN), leading to proteasomal degradation.

It localises to the cytoplasm. The protein localises to the cytosol. It is found in the microsome. The protein resides in the mitochondrion. Its subcellular location is the cell membrane. The enzyme catalyses L-glutamate + NH4(+) + ATP = L-glutamine + ADP + phosphate + H(+). It carries out the reaction L-cysteinyl-[protein] + hexadecanoyl-CoA = S-hexadecanoyl-L-cysteinyl-[protein] + CoA. Glutamine synthetase activity is inhibited by methionine sulfoximine (MSO). Its function is as follows. Glutamine synthetase that catalyzes the ATP-dependent conversion of glutamate and ammonia to glutamine. Its role depends on tissue localization: in the brain, it regulates the levels of toxic ammonia and converts neurotoxic glutamate to harmless glutamine, whereas in the liver, it is one of the enzymes responsible for the removal of ammonia. Plays a key role in ammonium detoxification during erythropoiesis: the glutamine synthetase activity is required to remove ammonium generated by porphobilinogen deaminase (HMBS) during heme biosynthesis to prevent ammonium accumulation and oxidative stress. Essential for proliferation of fetal skin fibroblasts. Independently of its glutamine synthetase activity, required for endothelial cell migration during vascular development. Involved in angiogenesis by regulating membrane localization and activation of the GTPase RHOJ, possibly by promoting RHOJ palmitoylation. May act as a palmitoyltransferase for RHOJ: able to autopalmitoylate and then transfer the palmitoyl group to RHOJ. Plays a role in ribosomal 40S subunit biogenesis. Through the interaction with BEST2, inhibits BEST2 channel activity by affecting the gating at the aperture in the absence of intracellular L-glutamate, but sensitizes BEST2 to intracellular L-glutamate, which promotes the opening of BEST2 and thus relieves its inhibitory effect on BEST2. In Sus scrofa (Pig), this protein is Glutamine synthetase.